Reading from the N-terminus, the 101-residue chain is Small ribosomal subunit protein uS14 (101 aa).

Belongs to the universal ribosomal protein uS14 family. In terms of assembly, part of the 30S ribosomal subunit. Contacts proteins S3 and S10.

Its function is as follows. Binds 16S rRNA, required for the assembly of 30S particles and may also be responsible for determining the conformation of the 16S rRNA at the A site. The sequence is that of Small ribosomal subunit protein uS14 from Marinobacter nauticus (strain ATCC 700491 / DSM 11845 / VT8) (Marinobacter aquaeolei).